Reading from the N-terminus, the 303-residue chain is ASC1-like protein (303 aa).

The next 6 helical transmembrane spans lie at 19-39 (YEDF…RFLL), 81-101 (CIYF…EPWF), 127-147 (ALYM…IFWE), 153-173 (FGVS…SYNI), 212-232 (YLCL…VLWS), and 255-275 (YIFN…WVLI). A TLC domain is found at 72-284 (RKFKESAWKC…IYRMLVKQIQ (213 aa)).

It is found in the endoplasmic reticulum membrane. Its function is as follows. Mediates resistance to sphinganine-analog mycotoxins (SAMs) by restoring the sphingolipid biosynthesis. Could salvage the transport of GPI-anchored proteins from the endoplasmic reticulum to the Golgi apparatus in ceramides-depleted cells after SAM exposure. The polypeptide is ASC1-like protein (Solanum lycopersicum (Tomato)).